Consider the following 141-residue polypeptide: Large ribosomal subunit protein uL11 (141 aa).

Belongs to the universal ribosomal protein uL11 family. Part of the ribosomal stalk of the 50S ribosomal subunit. Interacts with L10 and the large rRNA to form the base of the stalk. L10 forms an elongated spine to which L12 dimers bind in a sequential fashion forming a multimeric L10(L12)X complex. One or more lysine residues are methylated.

Functionally, forms part of the ribosomal stalk which helps the ribosome interact with GTP-bound translation factors. The sequence is that of Large ribosomal subunit protein uL11 from Fusobacterium nucleatum subsp. nucleatum (strain ATCC 25586 / DSM 15643 / BCRC 10681 / CIP 101130 / JCM 8532 / KCTC 2640 / LMG 13131 / VPI 4355).